The following is a 335-amino-acid chain: MLFRHLVLIISTLMVANTAWSANLPPREKFKRPDSIPAPLSNPLTLEKATLGKTLFFDQRLSRSGGMACATCHSPDQRWSDGRTLPLQAESVSNARRTPTVLNSAWLSALMWDGRATTLEEQAVLPITTAHEMNFDLASLVSRLQRIEGYRPLFTQAFGDDSISQQRITQALASFQRTLVSNIAPFDRWVAGDEQAISESAKRGFAVFNDKNKANCVACHSSWRFTDDSFHDIGLPSKDLGRGAKVPSQVTLMQHAFKTPSLRDLSIDGPYMHDGSIRGLKTVIKHYKSEAIQRESLSKDMQKFELSNLEESDLIAFIQSLDGGALKIQAPMMPE.

The signal sequence occupies residues 1–18; that stretch reads MLFRHLVLIISTLMVANT. Positions 69, 72, 73, 216, 219, 220, and 273 each coordinate heme c.

In terms of processing, binds 2 heme c groups covalently per subunit.

It is found in the periplasm. The protein operates within one-carbon metabolism; methylamine degradation. Functionally, involved in methylamine metabolism. Essential for the maturation of the beta subunit of MADH, presumably via a step in the biosynthesis of tryptophan tryptophylquinone (TTQ), the cofactor of MADH. The polypeptide is Methylamine utilization protein MauG (mauG) (Methylophilus methylotrophus (Bacterium W3A1)).